Here is a 70-residue protein sequence, read N- to C-terminus: Small ribosomal subunit protein bS21 (70 aa).

It belongs to the bacterial ribosomal protein bS21 family.

This Chromobacterium violaceum (strain ATCC 12472 / DSM 30191 / JCM 1249 / CCUG 213 / NBRC 12614 / NCIMB 9131 / NCTC 9757 / MK) protein is Small ribosomal subunit protein bS21.